The chain runs to 206 residues: Putative 3-methyladenine DNA glycosylase (206 aa).

It belongs to the DNA glycosylase MPG family.

This is Putative 3-methyladenine DNA glycosylase from Rhodopseudomonas palustris (strain ATCC BAA-98 / CGA009).